A 249-amino-acid chain; its full sequence is Homeobox-leucine zipper protein HOX6 (249 aa).

The interval 1–32 (MDGEEDSEWMMMDVGGKGGKGGGGGGAADRKK) is disordered. Residues 15–27 (GGKGGKGGGGGGA) show a composition bias toward gly residues. The segment at residues 27-86 (AADRKKRFSEEQIKSLESMFATQTKLEPRQKLQLARELGLQPRQVAIWFQNKRARWKSKQ) is a DNA-binding region (homeobox). Residues 85-129 (KQLEREYSALRDDYDALLCSYESLKKEKLALIKQLEKLAEMLQEP) are leucine-zipper. The interval 194-249 (FLRPSSQHHPPPPHAGAGFTSSEPAADHQSFNFHSSWPSSTEQTCSSTPWWEFESE) is disordered. Residues 212 to 242 (FTSSEPAADHQSFNFHSSWPSSTEQTCSSTP) are compositionally biased toward polar residues.

Belongs to the HD-ZIP homeobox family. Class I subfamily. In terms of tissue distribution, expressed in seedlings, roots, leaves, nodes, internodes, flowers and embryo.

The protein localises to the nucleus. Probable transcription factor that binds to the DNA sequence 5'-CAAT[AT]ATTG-3'. This Oryza sativa subsp. indica (Rice) protein is Homeobox-leucine zipper protein HOX6 (HOX6).